The following is a 265-amino-acid chain: Mlc titration factor A (265 aa).

Residues histidine 111, histidine 148, histidine 152, and glutamate 211 each contribute to the Zn(2+) site.

This sequence belongs to the MtfA family. Interacts with Mlc. It depends on Zn(2+) as a cofactor.

Its subcellular location is the cytoplasm. In terms of biological role, involved in the modulation of the activity of the glucose-phosphotransferase system (glucose-PTS). Interacts with the transcriptional repressor Mlc, preventing its interaction with DNA and leading to the modulation of expression of genes regulated by Mlc, including ptsG, which encodes the PTS system glucose-specific EIICB component. Its function is as follows. Shows zinc-dependent metallopeptidase activity. The protein is Mlc titration factor A of Escherichia coli O8 (strain IAI1).